The primary structure comprises 683 residues: Amphiphysin (683 aa).

2 coiled-coil regions span residues 10-83 (AKNV…SLHE) and 144-191 (DYDS…QEEL). The 217-residue stretch at 24–240 (VLQKLGKADE…MTKLGDQHAD (217 aa)) folds into the BAR domain. Disordered stretches follow at residues 244–311 (SIQG…KVTP), 421–443 (AETEQALPTEPQAEEPPTTAAAP), and 455–599 (EPKE…ASLS). Residue Ser252 is modified to Phosphoserine. Thr260 is modified (phosphothreonine). The span at 261 to 274 (PSPPEEASPLPSPT) shows a compositional bias: pro residues. A phosphoserine mark is found at Ser262, Ser268, Ser272, and Ser276. Thr280 is subject to Phosphothreonine. 2 stretches are compositionally biased toward low complexity: residues 424–443 (EQALPTEPQAEEPPTTAAAP) and 468–477 (AGETVGTEGS). Ser496 carries the post-translational modification Phosphoserine. The span at 539–559 (SNHEGEEHQETTTGTETREAT) shows a compositional bias: basic and acidic residues. Over residues 585–596 (AATPAPAGAVDA) the composition is skewed to low complexity. One can recognise an SH3 domain in the interval 610 to 683 (GFLYKVETLH…FPENFTRHLE (74 aa)). Ser626 is modified (phosphoserine).

As to quaternary structure, heterodimer with BIN1. Binds SH3GLB1. Interacts with REPS1 and SGIP1. Binds AP2A2. Interacts with AP2B1. Interacts with DNM1 and SYNJ1.

The protein resides in the cytoplasmic vesicle. Its subcellular location is the secretory vesicle. The protein localises to the synaptic vesicle membrane. It localises to the cytoplasm. It is found in the cytoskeleton. Functionally, may participate in mechanisms of regulated exocytosis in synapses and certain endocrine cell types. May control the properties of the membrane associated cytoskeleton. This chain is Amphiphysin (Amph), found in Rattus norvegicus (Rat).